A 94-amino-acid chain; its full sequence is Small ubiquitin-related modifier 3 (94 aa).

Residue lysine 11 forms a Glycyl lysine isopeptide (Lys-Gly) (interchain with G-Cter in SUMO) linkage. Positions 15-92 constitute a Ubiquitin-like domain; the sequence is DHINLKVAGQ…IDVFQQQTGG (78 aa). Glycine 92 is covalently cross-linked (Glycyl lysine isopeptide (Gly-Lys) (interchain with K-? in acceptor proteins)). Positions 93 to 94 are excised as a propeptide; the sequence is VC.

Belongs to the ubiquitin family. SUMO subfamily. In terms of assembly, interacts with sae2 and ube2i. Covalently attached to a number of proteins. In terms of processing, polymeric chains can be formed through Lys-11 cross-linking. Cleavage of precursor form by a sentrin-specific protease is necessary for function.

Its subcellular location is the cytoplasm. It is found in the nucleus. The protein resides in the PML body. Ubiquitin-like protein which can be covalently attached to target lysines either as a monomer or as a lysine-linked polymer. Does not seem to be involved in protein degradation and may function as an antagonist of ubiquitin in the degradation process. Plays a role in a number of cellular processes such as nuclear transport, DNA replication and repair, mitosis and signal transduction. Covalent attachment to its substrates requires prior activation by the E1 complex sae1-sae2 and linkage to the E2 enzyme ube2i. The protein is Small ubiquitin-related modifier 3 (sumo3) of Xenopus laevis (African clawed frog).